The chain runs to 188 residues: MATQPPQDQTSTTPSLPPHLDPTTYPRILTSATHNIHLELTYSTLNPTVALEHTSSPAAGANVLFLGTTRDTFEGRAVSQLSYTSYPPLALKSLMSIATRAVEKFDLKGVYIAHRLGVVPISEASIVVAVSAGHRGMAWKAAEEVLEEVKEKVEIWKREEFVDGGMEWRENRERDAEGRILSSTEGGK.

A compositionally biased stretch (low complexity) spans 1 to 14; that stretch reads MATQPPQDQTSTTP. Residues 1–23 form a disordered region; sequence MATQPPQDQTSTTPSLPPHLDPT. Substrate-binding positions include 134–135, K150, and 157–159; these read HR and KRE.

It belongs to the MoaE family. MOCS2B subfamily. As to quaternary structure, heterotetramer; composed of 2 small (MOCS2A) and 2 large (MOCS2B) subunits.

The protein resides in the cytoplasm. It carries out the reaction 2 [molybdopterin-synthase sulfur-carrier protein]-C-terminal-Gly-aminoethanethioate + cyclic pyranopterin phosphate + H2O = molybdopterin + 2 [molybdopterin-synthase sulfur-carrier protein]-C-terminal Gly-Gly + 2 H(+). It functions in the pathway cofactor biosynthesis; molybdopterin biosynthesis. Catalytic subunit of the molybdopterin synthase complex, a complex that catalyzes the conversion of precursor Z into molybdopterin. Acts by mediating the incorporation of 2 sulfur atoms from thiocarboxylated MOCS2A into precursor Z to generate a dithiolene group. This chain is Molybdopterin synthase catalytic subunit, found in Aspergillus fumigatus (strain ATCC MYA-4609 / CBS 101355 / FGSC A1100 / Af293) (Neosartorya fumigata).